The sequence spans 161 residues: Pleiotrophin-A (161 aa).

Positions 1–23 are cleaved as a signal peptide; sequence MRHQHGLFMLALLAFLFVITVLG. 5 disulfide bridges follow: cysteine 41-cysteine 70, cysteine 49-cysteine 79, cysteine 56-cysteine 83, cysteine 93-cysteine 125, and cysteine 103-cysteine 135. Chondroitin sulfate binding stretches follow at residues 86–93 and 117–125; these read KKQFGAEC and KRALHNAEC. The interval 136–161 is disordered; that stretch reads GKVTKPKLQESKKKKKEGKNKEKLLD. The segment at 141–161 is chondroitin sulfate A binding; the sequence is PKLQESKKKKKEGKNKEKLLD.

It belongs to the pleiotrophin family. Expressed in high levels in brain and eye. Lower levels in bone. In the tailbud embryo stage, it is expressed exclusively in the central nervous system, especially in the hind region of the brain.

The protein localises to the secreted. Its function is as follows. Secreted growth factor that mediates its signal through cell-surface proteoglycan and non-proteoglycan receptors. Binds cell-surface proteoglycan receptor via their chondroitin sulfate (CS) groups. Thereby regulates many processes like cell proliferation, cell survival, cell growth, cell differentiation and cell migration. Has antibacterial activity against both Gram-positive and Gram-negative bacteria. The protein is Pleiotrophin-A (ptn-a) of Xenopus laevis (African clawed frog).